We begin with the raw amino-acid sequence, 557 residues long: Dihydroxy-acid dehydratase (557 aa).

D78 lines the Mg(2+) pocket. C119 is a [2Fe-2S] cluster binding site. The Mg(2+) site is built by D120 and K121. Position 121 is an N6-carboxylysine (K121). Position 194 (C194) interacts with [2Fe-2S] cluster. E446 is a Mg(2+) binding site. S472 serves as the catalytic Proton acceptor.

It belongs to the IlvD/Edd family. As to quaternary structure, homodimer. [2Fe-2S] cluster is required as a cofactor. The cofactor is Mg(2+).

The catalysed reaction is (2R)-2,3-dihydroxy-3-methylbutanoate = 3-methyl-2-oxobutanoate + H2O. It carries out the reaction (2R,3R)-2,3-dihydroxy-3-methylpentanoate = (S)-3-methyl-2-oxopentanoate + H2O. Its pathway is amino-acid biosynthesis; L-isoleucine biosynthesis; L-isoleucine from 2-oxobutanoate: step 3/4. The protein operates within amino-acid biosynthesis; L-valine biosynthesis; L-valine from pyruvate: step 3/4. Its function is as follows. Functions in the biosynthesis of branched-chain amino acids. Catalyzes the dehydration of (2R,3R)-2,3-dihydroxy-3-methylpentanoate (2,3-dihydroxy-3-methylvalerate) into 2-oxo-3-methylpentanoate (2-oxo-3-methylvalerate) and of (2R)-2,3-dihydroxy-3-methylbutanoate (2,3-dihydroxyisovalerate) into 2-oxo-3-methylbutanoate (2-oxoisovalerate), the penultimate precursor to L-isoleucine and L-valine, respectively. The polypeptide is Dihydroxy-acid dehydratase (Desulfosudis oleivorans (strain DSM 6200 / JCM 39069 / Hxd3) (Desulfococcus oleovorans)).